Reading from the N-terminus, the 384-residue chain is Autophagy-related protein 30 (384 aa).

The disordered stretch occupies residues 1-63 (MFSRKQVQKR…ASPGQLRPRT (63 aa)). The segment covering 13–27 (ELSSLHCSNSSNSLN) has biased composition (low complexity). Residues 45–63 (RGNNRSDNVASPGQLRPRT) are compositionally biased toward polar residues. Ser112 is subject to Phosphoserine. Residues 266-291 (VKHDKPSSPLPNYHNTLKQAPSSNSQ) are disordered. Residues 278–291 (YHNTLKQAPSSNSQ) are compositionally biased toward polar residues.

In terms of assembly, interacts with ATG11, ATG17, ATG37, PEX3 and PEX14. In terms of processing, phosphorylation at Ser-112 is required for micro- and macropexophagy.

It localises to the vacuole lumen. It is found in the preautophagosomal structure. The protein localises to the peroxisome membrane. In terms of biological role, acts as the peroxisome receptor for pexophagy. Required for both micropexophagy and macropexophagy, but not for the cytoplasm to vacuole transport (Cvt) or autophagy pathways. Required for functional micropexophagic apparatus (MIPA) and relocation of ATG11 to the peroxisome-sequestering arms of the vacuole. This chain is Autophagy-related protein 30 (ATG30), found in Komagataella phaffii (strain GS115 / ATCC 20864) (Yeast).